The sequence spans 622 residues: Probable potassium transport system protein Kup (622 aa).

The next 12 membrane-spanning stretches (helical) occupy residues 7-27 (LAIGAIGIVFGDIGTSPLYAF), 44-64 (VLGVVSLIFWSMTLIVAIQYV), 95-115 (GWLVVLLGVFATSLFYGDSMI), 133-153 (PELQGFVIPIALVLLVGLFVL), 165-185 (FAPVMIVYFTVIATLGLISIV), 199-219 (AVLFFINDGFLAFLALGSVVL), 243-263 (WFGFVMPCLLLNYFGQGAMIV), 290-310 (LVILATFATFIASQAVISGAF), 338-358 (IYIPVINWALMVAVILLVLTF), 370-390 (IAVTGAVTIDTLLMAVLLVGV), 395-415 (WYYAAPVVIVFLIIDGAYFAA), and 422-442 (DGGWFPLVVGLIVFTLLTTWA).

Belongs to the HAK/KUP transporter (TC 2.A.72) family.

The protein resides in the cell inner membrane. It carries out the reaction K(+)(in) + H(+)(in) = K(+)(out) + H(+)(out). Its function is as follows. Transport of potassium into the cell. Likely operates as a K(+):H(+) symporter. This Erythrobacter litoralis (strain HTCC2594) protein is Probable potassium transport system protein Kup.